We begin with the raw amino-acid sequence, 100 residues long: Large ribosomal subunit protein bL21 (100 aa).

It belongs to the bacterial ribosomal protein bL21 family. As to quaternary structure, part of the 50S ribosomal subunit. Contacts protein L20.

In terms of biological role, this protein binds to 23S rRNA in the presence of protein L20. This Mycoplasma capricolum subsp. capricolum (strain California kid / ATCC 27343 / NCTC 10154) protein is Large ribosomal subunit protein bL21.